The sequence spans 247 residues: ATP synthase subunit a, chloroplastic (247 aa).

The next 5 helical transmembrane spans lie at 38-58, 95-115, 134-154, 199-219, and 220-240; these read QVLI…TIAV, VPFI…GALL, INTT…AGFT, LVVV…VMFL, and GLFT…AYIG.

It belongs to the ATPase A chain family. F-type ATPases have 2 components, CF(1) - the catalytic core - and CF(0) - the membrane proton channel. CF(1) has five subunits: alpha(3), beta(3), gamma(1), delta(1), epsilon(1). CF(0) has four main subunits: a, b, b' and c.

Its subcellular location is the plastid. It is found in the chloroplast thylakoid membrane. Functionally, key component of the proton channel; it plays a direct role in the translocation of protons across the membrane. The sequence is that of ATP synthase subunit a, chloroplastic from Liriodendron tulipifera (Tuliptree).